The primary structure comprises 355 residues: Phosphoribosylformylglycinamidine cyclo-ligase (355 aa).

The protein belongs to the AIR synthase family.

The protein localises to the cytoplasm. It carries out the reaction 2-formamido-N(1)-(5-O-phospho-beta-D-ribosyl)acetamidine + ATP = 5-amino-1-(5-phospho-beta-D-ribosyl)imidazole + ADP + phosphate + H(+). Its pathway is purine metabolism; IMP biosynthesis via de novo pathway; 5-amino-1-(5-phospho-D-ribosyl)imidazole from N(2)-formyl-N(1)-(5-phospho-D-ribosyl)glycinamide: step 2/2. The protein is Phosphoribosylformylglycinamidine cyclo-ligase of Paraburkholderia phymatum (strain DSM 17167 / CIP 108236 / LMG 21445 / STM815) (Burkholderia phymatum).